The chain runs to 258 residues: Indole-3-glycerol phosphate synthase (258 aa).

Belongs to the TrpC family.

The catalysed reaction is 1-(2-carboxyphenylamino)-1-deoxy-D-ribulose 5-phosphate + H(+) = (1S,2R)-1-C-(indol-3-yl)glycerol 3-phosphate + CO2 + H2O. It participates in amino-acid biosynthesis; L-tryptophan biosynthesis; L-tryptophan from chorismate: step 4/5. This is Indole-3-glycerol phosphate synthase from Legionella pneumophila (strain Paris).